The following is a 475-amino-acid chain: 3-isopropylmalate dehydratase large subunit 1 (475 aa).

[4Fe-4S] cluster is bound by residues cysteine 353, cysteine 413, and cysteine 416.

The protein belongs to the aconitase/IPM isomerase family. LeuC type 1 subfamily. Heterodimer of LeuC and LeuD. It depends on [4Fe-4S] cluster as a cofactor.

It carries out the reaction (2R,3S)-3-isopropylmalate = (2S)-2-isopropylmalate. Its pathway is amino-acid biosynthesis; L-leucine biosynthesis; L-leucine from 3-methyl-2-oxobutanoate: step 2/4. In terms of biological role, catalyzes the isomerization between 2-isopropylmalate and 3-isopropylmalate, via the formation of 2-isopropylmaleate. This chain is 3-isopropylmalate dehydratase large subunit 1, found in Mannheimia succiniciproducens (strain KCTC 0769BP / MBEL55E).